The following is a 157-amino-acid chain: Transcription elongation factor GreA (157 aa).

A coiled-coil region spans residues 13–75 (RARLEAELEE…EIKSILARAQ (63 aa)). The segment at 113-142 (EAKPSEGKISNESPIGSALLGKRPRQKVTV) is disordered.

The protein belongs to the GreA/GreB family.

Necessary for efficient RNA polymerase transcription elongation past template-encoded arresting sites. The arresting sites in DNA have the property of trapping a certain fraction of elongating RNA polymerases that pass through, resulting in locked ternary complexes. Cleavage of the nascent transcript by cleavage factors such as GreA or GreB allows the resumption of elongation from the new 3'terminus. GreA releases sequences of 2 to 3 nucleotides. In Roseiflexus sp. (strain RS-1), this protein is Transcription elongation factor GreA.